The sequence spans 601 residues: Glutathione-regulated potassium-efflux system protein KefB (601 aa).

The next 13 membrane-spanning stretches (helical) occupy residues 4–24 (ADLL…VPLA), 29–49 (IGAV…GLGF), 55–75 (EILH…GLEL), 87–107 (IFGV…GLLM), 111–131 (FLWQ…TAMA), 152–172 (VLLF…LLAG), 177–197 (HFDW…LIGG), 207–227 (FIAA…LVLS), 230–250 (LFMD…GVLL), 262–282 (AIDP…GMSL), 284–304 (LGVL…LVVI), 324–344 (MQFA…FSTA), and 356–376 (ALLL…MKGI). An RCK N-terminal domain is found at 400-519 (KPQVIVVGFG…AGVTQFSRET (120 aa)).

Belongs to the monovalent cation:proton antiporter 2 (CPA2) transporter (TC 2.A.37) family. KefB subfamily. Interacts with the regulatory subunit KefG.

The protein localises to the cell inner membrane. In terms of biological role, pore-forming subunit of a potassium efflux system that confers protection against electrophiles. Catalyzes K(+)/H(+) antiport. The sequence is that of Glutathione-regulated potassium-efflux system protein KefB from Salmonella paratyphi A (strain ATCC 9150 / SARB42).